We begin with the raw amino-acid sequence, 320 residues long: Cytochrome f (320 aa).

A signal peptide spans 1–35; sequence MNFFTHKKNNFGSFVTIFSFLVALGVTNLTPAAEA. The heme site is built by Tyr36, Cys56, Cys59, and His60. The chain crosses the membrane as a helical span at residues 286–306; sequence IQGLLVFFATVLFAQVLLVLK.

It belongs to the cytochrome f family. In terms of assembly, the 4 large subunits of the cytochrome b6-f complex are cytochrome b6, subunit IV (17 kDa polypeptide, petD), cytochrome f and the Rieske protein, while the 4 small subunits are PetG, PetL, PetM and PetN. The complex functions as a dimer. It depends on heme as a cofactor.

It is found in the plastid. The protein resides in the chloroplast thylakoid membrane. In terms of biological role, component of the cytochrome b6-f complex, which mediates electron transfer between photosystem II (PSII) and photosystem I (PSI), cyclic electron flow around PSI, and state transitions. This Tetradesmus obliquus (Green alga) protein is Cytochrome f.